A 487-amino-acid polypeptide reads, in one-letter code: Ribosomal protein uS12 methylthiotransferase RimO (487 aa).

The 112-residue stretch at 38 to 149 folds into the MTTase N-terminal domain; sequence PTVAFAHLGC…IVEVLEQVEA (112 aa). 6 residues coordinate [4Fe-4S] cluster: Cys47, Cys83, Cys112, Cys187, Cys191, and Cys194. Residues 173-402 form the Radical SAM core domain; sequence TTSEAVAYLK…MEAQQAISAE (230 aa). One can recognise a TRAM domain in the interval 405 to 476; it reads GAWVGRIVDV…IYDLEGEVVG (72 aa).

This sequence belongs to the methylthiotransferase family. RimO subfamily. It depends on [4Fe-4S] cluster as a cofactor.

It localises to the cytoplasm. The enzyme catalyses L-aspartate(89)-[ribosomal protein uS12]-hydrogen + (sulfur carrier)-SH + AH2 + 2 S-adenosyl-L-methionine = 3-methylsulfanyl-L-aspartate(89)-[ribosomal protein uS12]-hydrogen + (sulfur carrier)-H + 5'-deoxyadenosine + L-methionine + A + S-adenosyl-L-homocysteine + 2 H(+). Functionally, catalyzes the methylthiolation of an aspartic acid residue of ribosomal protein uS12. This is Ribosomal protein uS12 methylthiotransferase RimO from Synechococcus sp. (strain RCC307).